The chain runs to 456 residues: Putative dihydroorotase (456 aa).

This sequence belongs to the metallo-dependent hydrolases superfamily. DHOase family. Class I DHOase subfamily.

The enzyme catalyses (S)-dihydroorotate + H2O = N-carbamoyl-L-aspartate + H(+). The protein operates within pyrimidine metabolism; UMP biosynthesis via de novo pathway; (S)-dihydroorotate from bicarbonate: step 3/3. Catalyzes the reversible cyclization of carbamoyl aspartate to dihydroorotate. The chain is Putative dihydroorotase from Rhodopirellula baltica (strain DSM 10527 / NCIMB 13988 / SH1).